Consider the following 121-residue polypeptide: Large ribosomal subunit protein bL17 (121 aa).

The protein belongs to the bacterial ribosomal protein bL17 family. In terms of assembly, part of the 50S ribosomal subunit. Contacts protein L32.

The polypeptide is Large ribosomal subunit protein bL17 (Metamycoplasma arthritidis (strain 158L3-1) (Mycoplasma arthritidis)).